Consider the following 278-residue polypeptide: Casein kinase II subunit beta (278 aa).

2 disordered regions span residues 1-22 (MSQE…DSGA) and 78-111 (DEEE…RNKS). At S2 the chain carries N-acetylserine. The residue at position 2 (S2) is a Phosphoserine. Residues 78–94 (DEEEDEDDVVEEDEVDQ) are compositionally biased toward acidic residues.

This sequence belongs to the casein kinase 2 subunit beta family. As to quaternary structure, tetramer composed of an alpha subunit, an alpha' subunit, one beta subunit and one beta' subunit. Interacts with FACT subunits POB3 and SPT16. interacts with YTA7. In terms of processing, phosphorylated by alpha subunit.

In terms of biological role, regulatory subunit of casein kinase II/CK2. As part of the kinase complex regulates the basal catalytic activity of the alpha subunit a constitutively active serine/threonine-protein kinase that phosphorylates a large number of substrates containing acidic residues C-terminal to the phosphorylated serine or threonine. This Saccharomyces cerevisiae (strain ATCC 204508 / S288c) (Baker's yeast) protein is Casein kinase II subunit beta (CKB1).